The chain runs to 816 residues: Fibroblast growth factor receptor (816 aa).

Residues 1–19 (MISDWCVVLVLLMSRLVFG) form the signal peptide. At 20–370 (LNFTEPVNYI…YKEESVEKTV (351 aa)) the chain is on the extracellular side. 9 N-linked (GlcNAc...) asparagine glycosylation sites follow: Asn-21, Asn-69, Asn-119, Asn-156, Asn-171, Asn-244, Asn-274, Asn-313, and Asn-321. The region spanning 25-105 (PVNYILKLGE…VTAMNEESVQ (81 aa)) is the Ig-like C2-type 1 domain. The cysteines at positions 43 and 94 are disulfide-linked. Residues 126 to 217 (LRIKNDISLL…GKIEHIMTVE (92 aa)) enclose the Ig-like C2-type 2 domain. A disulfide bond links Cys-147 and Cys-201. A helical membrane pass occupies residues 371–391 (IFIVITSMLAGLIFVAFVIFF). Residues 392-816 (ICRVRSKDKF…DILLSHYAVS (425 aa)) lie on the Cytoplasmic side of the membrane. The region spanning 474–747 (LETDCLLGEG…QLIEDLERML (274 aa)) is the Protein kinase domain. ATP is bound by residues 480–488 (LGEGAFGRV) and Lys-508. Asp-612 (proton acceptor) is an active-site residue. Residue Tyr-643 is modified to Phosphotyrosine; by autocatalysis.

Belongs to the protein kinase superfamily. Tyr protein kinase family. Fibroblast growth factor receptor subfamily.

It localises to the membrane. It carries out the reaction L-tyrosyl-[protein] + ATP = O-phospho-L-tyrosyl-[protein] + ADP + H(+). Its function is as follows. Receptor for basic fibroblast growth factor. The polypeptide is Fibroblast growth factor receptor (FGFR) (Hydra vulgaris (Hydra)).